We begin with the raw amino-acid sequence, 162 residues long: NADH-quinone oxidoreductase subunit I (162 aa).

2 4Fe-4S ferredoxin-type domains span residues 54–83 (RRYENGEERCIACKLCEAVCPALAITIESE) and 93–122 (TRYDIDLTKCIFCGFCEESCPVDSIVETHI). [4Fe-4S] cluster contacts are provided by cysteine 63, cysteine 66, cysteine 69, cysteine 73, cysteine 102, cysteine 105, cysteine 108, and cysteine 112.

The protein belongs to the complex I 23 kDa subunit family. In terms of assembly, NDH-1 is composed of 14 different subunits. Subunits NuoA, H, J, K, L, M, N constitute the membrane sector of the complex. [4Fe-4S] cluster serves as cofactor.

It localises to the cell inner membrane. The catalysed reaction is a quinone + NADH + 5 H(+)(in) = a quinol + NAD(+) + 4 H(+)(out). Functionally, NDH-1 shuttles electrons from NADH, via FMN and iron-sulfur (Fe-S) centers, to quinones in the respiratory chain. The immediate electron acceptor for the enzyme in this species is believed to be ubiquinone. Couples the redox reaction to proton translocation (for every two electrons transferred, four hydrogen ions are translocated across the cytoplasmic membrane), and thus conserves the redox energy in a proton gradient. This is NADH-quinone oxidoreductase subunit I from Paraburkholderia xenovorans (strain LB400).